A 261-amino-acid chain; its full sequence is Na(+)-translocating NADH-quinone reductase subunit C (261 aa).

Residues 12–32 traverse the membrane as a helical segment; it reads LGVVIGLSLVCSIIVSTAAVG. Thr-229 carries the FMN phosphoryl threonine modification.

It belongs to the NqrC family. As to quaternary structure, composed of six subunits; NqrA, NqrB, NqrC, NqrD, NqrE and NqrF. FMN is required as a cofactor.

The protein resides in the cell inner membrane. The catalysed reaction is a ubiquinone + n Na(+)(in) + NADH + H(+) = a ubiquinol + n Na(+)(out) + NAD(+). NQR complex catalyzes the reduction of ubiquinone-1 to ubiquinol by two successive reactions, coupled with the transport of Na(+) ions from the cytoplasm to the periplasm. NqrA to NqrE are probably involved in the second step, the conversion of ubisemiquinone to ubiquinol. The chain is Na(+)-translocating NADH-quinone reductase subunit C from Vibrio parahaemolyticus serotype O3:K6 (strain RIMD 2210633).